A 64-amino-acid chain; its full sequence is Large ribosomal subunit protein uL29 (64 aa).

The protein belongs to the universal ribosomal protein uL29 family.

The polypeptide is Large ribosomal subunit protein uL29 (Dichelobacter nodosus (strain VCS1703A)).